We begin with the raw amino-acid sequence, 109 residues long: RYamide neuropeptides (109 aa).

The first 22 residues, 1–22, serve as a signal peptide directing secretion; it reads MNECVNKLLHLKFLFYFILGIQ. Tyr-33 bears the Tyrosine amide mark. Positions 36–53 are excised as a propeptide; it reads STTYDESLKSRRIFIVPR. Tyr-63 is subject to Tyrosine amide. A propeptide spanning residues 67 to 109 is cleaved from the precursor; the sequence is SGKYLCLSREINKLIVRKRLRNNDKERTPTLSFITKHFLMRNT.

Its subcellular location is the secreted. Its function is as follows. Neuropeptides RYamide-1 and RYamide-2 are ligands for the G-protein coupled receptor RYa-R. May suppress feeding behavior. This chain is RYamide neuropeptides, found in Drosophila melanogaster (Fruit fly).